A 430-amino-acid polypeptide reads, in one-letter code: Dihydroorotase (430 aa).

Zn(2+) is bound by residues His-61 and His-63. Residues 63-65 and Asn-95 contribute to the substrate site; that span reads HLR. Residues Asp-153, His-180, and His-233 each coordinate Zn(2+). Asn-279 provides a ligand contact to substrate. Asp-306 serves as a coordination point for Zn(2+). The active site involves Asp-306. Residues His-310 and 324–325 each bind substrate; that span reads FG.

This sequence belongs to the metallo-dependent hydrolases superfamily. DHOase family. Class I DHOase subfamily. Zn(2+) serves as cofactor.

The enzyme catalyses (S)-dihydroorotate + H2O = N-carbamoyl-L-aspartate + H(+). It functions in the pathway pyrimidine metabolism; UMP biosynthesis via de novo pathway; (S)-dihydroorotate from bicarbonate: step 3/3. Catalyzes the reversible cyclization of carbamoyl aspartate to dihydroorotate. The protein is Dihydroorotase of Lactiplantibacillus plantarum (strain ATCC BAA-793 / NCIMB 8826 / WCFS1) (Lactobacillus plantarum).